Consider the following 66-residue polypeptide: Large ribosomal subunit protein bL33c (66 aa).

Belongs to the bacterial ribosomal protein bL33 family.

It is found in the plastid. Its subcellular location is the chloroplast. This chain is Large ribosomal subunit protein bL33c, found in Helianthus annuus (Common sunflower).